The chain runs to 141 residues: uncharacterized protein (141 aa).

5 helical membrane passes run 7-27, 34-54, 69-89, 97-117, and 121-141; these read FWAL…KVGV, FATL…VAAT, LFLA…FRAL, VAPL…LFLG, and NLMN…LAVF. Residues 14–140 form the EamA domain; that stretch reads AFAALTAVFA…IAAGALLLAV (127 aa).

It belongs to the EamA transporter family.

The protein localises to the cell membrane. This is an uncharacterized protein from Sinorhizobium sp.